The primary structure comprises 213 residues: Outer envelope pore protein 24B, chloroplastic (213 aa).

At 1–3 (MAM) the chain is on the cytoplasmic side. Residues 4 to 13 (KASIKGKYDT) form a beta stranded membrane-spanning segment. The Chloroplast intermembrane segment spans residues 14 to 18 (DKTSG). Residues 19-28 (IGSLAFNAGD) form a beta stranded membrane-spanning segment. At 29 to 32 (IKLR) the chain is on the cytoplasmic side. The beta stranded transmembrane segment at 33 to 42 (ATMTDATLVA) threads the bilayer. At 43–55 (GPTLTGLALAVEK) the chain is on the chloroplast intermembrane side. The beta stranded transmembrane segment at 56–64 (PGSFIVEYN) threads the bilayer. The Cytoplasmic portion of the chain corresponds to 65 to 70 (VPKKDV). Residues 71 to 80 (RFQFMNTVRI) traverse the membrane as a beta stranded segment. The Chloroplast intermembrane segment spans residues 81–93 (AEKPLNLTYIHSR). Residues 94-103 (ADNRTIVDGS) form a beta stranded membrane-spanning segment. The Cytoplasmic segment spans residues 104-108 (LVIDS). A beta stranded transmembrane segment spans residues 109 to 118 (ANKLSANHMV). The Chloroplast intermembrane portion of the chain corresponds to 119 to 122 (GTNN). A beta stranded membrane pass occupies residues 123-132 (CKIKYTYAHG). The Cytoplasmic segment spans residues 133 to 144 (GLATFEPCYDLA). Residues 145–156 (KNTWDFAVSRRF) traverse the membrane as a beta stranded segment. The Chloroplast intermembrane segment spans residues 157–159 (YSG). The chain crosses the membrane as a beta stranded span at residues 160 to 168 (DNVRATYQT). Topologically, residues 169–170 (SS) are cytoplasmic. The beta stranded transmembrane segment at 171-179 (KLLGMEWSR) threads the bilayer. Topologically, residues 180-201 (NNKASGFKVCASVNLADELKTP) are chloroplast intermembrane. Residues 202–211 (KLTAETTWNL) traverse the membrane as a beta stranded segment. Topologically, residues 212–213 (EM) are cytoplasmic.

It belongs to the plastid outer envelope porin OEP24 (TC 1.B.28) family. As to quaternary structure, homooligomers form large rather nonselective pores in plastidial outer membranes.

The protein localises to the plastid. Its subcellular location is the etioplast membrane. It is found in the chloroplast outer membrane. Functionally, high-conductance voltage-dependent solute channel with a slight selectivity for cations transporting triosephosphates, dicarboxylic acids, ATP, inorganic phosphate (Pi), sugars, and positively or negatively charged amino acids. This Arabidopsis thaliana (Mouse-ear cress) protein is Outer envelope pore protein 24B, chloroplastic (OEP24B).